The following is a 448-amino-acid chain: Homogentisate 1,2-dioxygenase (448 aa).

Catalysis depends on His303, which acts as the Proton acceptor. His346 and Glu352 together coordinate Fe cation. The homogentisate site is built by Tyr361 and His382. His382 provides a ligand contact to Fe cation.

This sequence belongs to the homogentisate dioxygenase family. Hexamer; dimer of trimers. It depends on Fe cation as a cofactor.

It carries out the reaction homogentisate + O2 = 4-maleylacetoacetate + H(+). It functions in the pathway amino-acid degradation; L-phenylalanine degradation; acetoacetate and fumarate from L-phenylalanine: step 4/6. Its function is as follows. Involved in the catabolism of homogentisate (2,5-dihydroxyphenylacetate or 2,5-OH-PhAc), a central intermediate in the degradation of phenylalanine and tyrosine. Catalyzes the oxidative ring cleavage of the aromatic ring of homogentisate to yield maleylacetoacetate. The polypeptide is Homogentisate 1,2-dioxygenase (Rhodopseudomonas palustris (strain TIE-1)).